The following is a 653-amino-acid chain: tRNA 5-methylaminomethyl-2-thiouridine biosynthesis bifunctional protein MnmC (653 aa).

The segment at 1-236 (MPDRLVPATL…KFAMLVGEYA (236 aa)) is tRNA (mnm(5)s(2)U34)-methyltransferase. Residues 260–653 (IGAGLAGCAL…IRALRGRKLG (394 aa)) form an FAD-dependent cmnm(5)s(2)U34 oxidoreductase region.

This sequence in the N-terminal section; belongs to the methyltransferase superfamily. tRNA (mnm(5)s(2)U34)-methyltransferase family. It in the C-terminal section; belongs to the DAO family. The cofactor is FAD.

The protein resides in the cytoplasm. The enzyme catalyses 5-aminomethyl-2-thiouridine(34) in tRNA + S-adenosyl-L-methionine = 5-methylaminomethyl-2-thiouridine(34) in tRNA + S-adenosyl-L-homocysteine + H(+). In terms of biological role, catalyzes the last two steps in the biosynthesis of 5-methylaminomethyl-2-thiouridine (mnm(5)s(2)U) at the wobble position (U34) in tRNA. Catalyzes the FAD-dependent demodification of cmnm(5)s(2)U34 to nm(5)s(2)U34, followed by the transfer of a methyl group from S-adenosyl-L-methionine to nm(5)s(2)U34, to form mnm(5)s(2)U34. This Burkholderia vietnamiensis (strain G4 / LMG 22486) (Burkholderia cepacia (strain R1808)) protein is tRNA 5-methylaminomethyl-2-thiouridine biosynthesis bifunctional protein MnmC.